We begin with the raw amino-acid sequence, 210 residues long: Ribonuclease HII (210 aa).

One can recognise an RNase H type-2 domain in the interval 18–210 (GLIAGVDEVG…FKPVKALLGL (193 aa)). Positions 24, 25, and 116 each coordinate a divalent metal cation.

This sequence belongs to the RNase HII family. Mn(2+) is required as a cofactor. The cofactor is Mg(2+).

Its subcellular location is the cytoplasm. It carries out the reaction Endonucleolytic cleavage to 5'-phosphomonoester.. Endonuclease that specifically degrades the RNA of RNA-DNA hybrids. The polypeptide is Ribonuclease HII (Shewanella baltica (strain OS155 / ATCC BAA-1091)).